The primary structure comprises 452 residues: tRNA pseudouridine synthase Pus10 (452 aa).

Residues 71–200 form the THUMP domain; the sequence is EMLRALAPSC…DGHVEIQIQP (130 aa). Catalysis depends on Asp-269, which acts as the Nucleophile. Substrate contacts are provided by Tyr-335 and Tyr-406.

The protein belongs to the pseudouridine synthase Pus10 family.

The catalysed reaction is uridine(54) in tRNA = pseudouridine(54) in tRNA. It carries out the reaction uridine(55) in tRNA = pseudouridine(55) in tRNA. In terms of biological role, responsible for synthesis of pseudouridine from uracil-54 and uracil-55 in the psi GC loop of transfer RNAs. The chain is tRNA pseudouridine synthase Pus10 from Methanothrix thermoacetophila (strain DSM 6194 / JCM 14653 / NBRC 101360 / PT) (Methanosaeta thermophila).